The sequence spans 425 residues: Serine--tRNA ligase (425 aa).

Residues 110 to 134 are disordered; that stretch reads NLPSADAPEGKSEADNVEVKRWGEP. The span at 117 to 134 shows a compositional bias: basic and acidic residues; the sequence is PEGKSEADNVEVKRWGEP. 233-235 lines the L-serine pocket; it reads TAE. 264–266 is an ATP binding site; sequence RRE. Position 287 (Glu287) interacts with L-serine. 351–354 lines the ATP pocket; that stretch reads EISS. Ser385 serves as a coordination point for L-serine.

Belongs to the class-II aminoacyl-tRNA synthetase family. Type-1 seryl-tRNA synthetase subfamily. As to quaternary structure, homodimer. The tRNA molecule binds across the dimer.

The protein localises to the cytoplasm. It catalyses the reaction tRNA(Ser) + L-serine + ATP = L-seryl-tRNA(Ser) + AMP + diphosphate + H(+). The enzyme catalyses tRNA(Sec) + L-serine + ATP = L-seryl-tRNA(Sec) + AMP + diphosphate + H(+). Its pathway is aminoacyl-tRNA biosynthesis; selenocysteinyl-tRNA(Sec) biosynthesis; L-seryl-tRNA(Sec) from L-serine and tRNA(Sec): step 1/1. Functionally, catalyzes the attachment of serine to tRNA(Ser). Is also able to aminoacylate tRNA(Sec) with serine, to form the misacylated tRNA L-seryl-tRNA(Sec), which will be further converted into selenocysteinyl-tRNA(Sec). The sequence is that of Serine--tRNA ligase from Synechococcus sp. (strain RCC307).